The primary structure comprises 816 residues: uncharacterized protein (816 aa).

Disordered regions lie at residues 1–34, 65–101, 154–406, and 770–816; these read MLFNINRQEDDPFTQLINQSSANTQNQQAHQQES, RQNNRAYGEDAKNRKFPTVSATSAYSKQQPKDLGYKN, DEKD…ENPE, and RQHK…VMYA. The segment covering 18–32 has biased composition (low complexity); the sequence is NQSSANTQNQQAHQQ. A compositionally biased stretch (polar residues) spans 83–92; the sequence is VSATSAYSKQ. The segment covering 161 to 223 has biased composition (low complexity); it reads TTTSSSTSTS…STSTTSTSTT (63 aa). Residues 246 to 260 show a composition bias toward polar residues; the sequence is ESTSIGKGTADSAQI. Phosphoserine is present on S286. Basic and acidic residues predominate over residues 292–316; it reads DEQKEEKSDVKKVNPPSGEEKKEVE. Residues 317 to 326 are compositionally biased toward acidic residues; the sequence is AEGDAEEETE. Positions 327-342 are enriched in low complexity; the sequence is QSSAEESAERTSTPET. Phosphoserine occurs at positions 343 and 347. The span at 343 to 353 shows a compositional bias: acidic residues; it reads SEPESEEDESP. A compositionally biased stretch (low complexity) spans 380–396; it reads KSPTSSSTQKSKTAAPS. 2 stretches are compositionally biased toward basic and acidic residues: residues 770 to 792 and 799 to 816; these read RQHKQAEGIHAAENHKIPNDRSQ and PKDDSLYEYHTEEDVMYA. T809 is subject to Phosphothreonine.

In terms of processing, pyrophosphorylated by 5-diphosphoinositol pentakisphosphate (5-IP7). Serine pyrophosphorylation is achieved by Mg(2+)-dependent, but enzyme independent transfer of a beta-phosphate from a inositol pyrophosphate to a pre-phosphorylated serine residue.

This is an uncharacterized protein from Saccharomyces cerevisiae (strain ATCC 204508 / S288c) (Baker's yeast).